Here is a 131-residue protein sequence, read N- to C-terminus: Profilin-5 (131 aa).

Cysteines 13 and 115 form a disulfide. The short motif at 81–97 (VVIRGKKGTGGITIKKT) is the Involved in PIP2 interaction element. At T111 the chain carries Phosphothreonine.

Belongs to the profilin family. Multimer. Occurs in many kinds of cells as a complex with monomeric actin in a 1:1 ratio. Phosphorylated by MAP kinases. In terms of tissue distribution, expressed in vegetative tissues. Present in shoots, roots and coleoptiles. Also detected in endosperm and pollen.

The protein localises to the cytoplasm. It is found in the cytoskeleton. Its activity is regulated as follows. Actin binding is enhanced by calcium Ca(2+). Functionally, binds to actin and affects the structure of the cytoskeleton. At high concentrations, profilin prevents the polymerization of actin, whereas it enhances it at low concentrations. By binding to PIP2, it inhibits the formation of IP3 and DG. Has a high affinity for poly-proline. The polypeptide is Profilin-5 (Zea mays (Maize)).